A 262-amino-acid polypeptide reads, in one-letter code: 7alpha-hydroxysteroid dehydrogenase (262 aa).

Residues 13–18, Arg38, 63–64, and Asn90 contribute to the NADP(+) site; these read SSTRGI and NA. 2 residues coordinate taurochenodeoxycholate: Thr145 and Tyr158. NADP(+)-binding positions include Tyr158, Lys162, and 191–195; that span reads IGTRA. Tyr158 acts as the Proton acceptor in catalysis.

This sequence belongs to the short-chain dehydrogenases/reductases (SDR) family. Homotetramer. A dynamic equilibrium between dimers and tetramers seems to exist.

It catalyses the reaction cholate + NADP(+) = 3alpha,12alpha-dihydroxy-7-oxo-5beta-cholanate + NADPH + H(+). It carries out the reaction chenodeoxycholate + NADP(+) = 7-oxolithocholate + NADPH + H(+). The catalysed reaction is 3alpha,7alpha-dihydroxy-12-oxo-5beta-cholanate + NADP(+) = 7,12-dioxo-lithocholate + NADPH + H(+). The enzyme catalyses 7alpha-hydroxy-3,12-dioxo-5beta-cholanate + NADP(+) = dehydrocholate + NADPH + H(+). It catalyses the reaction glycochenodeoxycholate + NADP(+) = 7-oxoglycolithocholate + NADPH + H(+). It carries out the reaction taurochenodeoxycholate + NADP(+) = 7-oxotaurolithocholate + NADPH + H(+). With respect to regulation, activated by metal ions such as Mg(2+), Na(+) and K(+). Its function is as follows. 7alpha-hydroxysteroid dehydrogenase that catalyzes the NADP(+)-dependent oxidation of the 7alpha-hydroxy group of 7alpha-hydroxysteroids, such as cholate, chenodeoxycholate, glycochenodeoxycholate and taurochenodeoxycholate, to the corresponding 7-oxosteroids. Is also able to catalyze the reverse reduction reactions. Together with 7beta-HSDH encoded in the adjacent gene, is likely involved in the epimerization of the hydroxy group at C-7 of primary bile acids through 7-keto bile acid intermediates. The chain is 7alpha-hydroxysteroid dehydrogenase from Clostridium sardiniense (Clostridium absonum).